A 373-amino-acid polypeptide reads, in one-letter code: Chaperone protein DnaJ (373 aa).

Residues D5–G70 enclose the J domain. A CR-type zinc finger spans residues G136 to K214. 8 residues coordinate Zn(2+): C149, C152, C166, C169, C188, C191, C202, and C205. CXXCXGXG motif repeat units lie at residues C149–G156, C166–G173, C188–G195, and C202–G209.

Belongs to the DnaJ family. Homodimer. The cofactor is Zn(2+).

It is found in the cytoplasm. Its function is as follows. Participates actively in the response to hyperosmotic and heat shock by preventing the aggregation of stress-denatured proteins and by disaggregating proteins, also in an autonomous, DnaK-independent fashion. Unfolded proteins bind initially to DnaJ; upon interaction with the DnaJ-bound protein, DnaK hydrolyzes its bound ATP, resulting in the formation of a stable complex. GrpE releases ADP from DnaK; ATP binding to DnaK triggers the release of the substrate protein, thus completing the reaction cycle. Several rounds of ATP-dependent interactions between DnaJ, DnaK and GrpE are required for fully efficient folding. Also involved, together with DnaK and GrpE, in the DNA replication of plasmids through activation of initiation proteins. The protein is Chaperone protein DnaJ of Syntrophotalea carbinolica (strain DSM 2380 / NBRC 103641 / GraBd1) (Pelobacter carbinolicus).